A 132-amino-acid polypeptide reads, in one-letter code: Small ribosomal subunit protein uS11 (132 aa).

A disordered region spans residues 108-132 (GRIEDVTPVPHDSCRPKGGRRGRRV).

The protein belongs to the universal ribosomal protein uS11 family. As to quaternary structure, part of the 30S ribosomal subunit.

Located on the platform of the 30S subunit. The protein is Small ribosomal subunit protein uS11 of Methanoregula boonei (strain DSM 21154 / JCM 14090 / 6A8).